A 195-amino-acid polypeptide reads, in one-letter code: HTH-type transcriptional regulator BetI (195 aa).

An HTH tetR-type domain is found at 8–68 (SIRRRQLIDA…ATMRDITSQL (61 aa)). Residues 31 to 50 (TIAQIARRAGVSTGIISHYF) constitute a DNA-binding region (H-T-H motif).

The protein operates within amine and polyamine biosynthesis; betaine biosynthesis via choline pathway [regulation]. Functionally, repressor involved in the biosynthesis of the osmoprotectant glycine betaine. It represses transcription of the choline transporter BetT and the genes of BetAB involved in the synthesis of glycine betaine. In Shigella flexneri serotype 5b (strain 8401), this protein is HTH-type transcriptional regulator BetI.